Here is a 267-residue protein sequence, read N- to C-terminus: Nanos homolog 1 (267 aa).

The interval 40–56 (FSSWNDYLGLATLITRA) is essential for its translational repressor activity. The segment at 57–94 (SDRGSPHEGPGPTAAGPTMGPPEDDEDDDGEEPEAGGR) is disordered. A compositionally biased stretch (acidic residues) spans 78-90 (PEDDEDDDGEEPE). Residues 188–242 (VCVFCRNNKEAVALYTTHILKGPDGRVLCPVLRRYTCPLCGASGDNAHTIKYCPL) form a Nanos-type zinc finger. 8 residues coordinate Zn(2+): C189, C192, H205, C216, C224, C227, H235, and C240. Short sequence motifs (C2HC) lie at residues 189–216 (CVFCRNNKEAVALYTTHILKGPDGRVLC) and 224–240 (CPLCGASGDNAHTIKYC). The disordered stretch occupies residues 243–267 (SKVPPPTVRPPPRSNRDSLPSKKLR). The segment covering 244-255 (KVPPPTVRPPPR) has biased composition (pro residues). Basic and acidic residues predominate over residues 256–267 (SNRDSLPSKKLR).

The protein belongs to the nanos family. As to quaternary structure, interacts with PUM2, SNAPIN and CTNNB1. Interacts (via N-terminal region) with CTNND1. Interacts with DDX20 (via N-terminal region). As to expression, expressed in the oocyte. Transiently expressed in eight-cell embryos. At 12.5 dpc, it is re-expressed in the central nervous system and the expression continues in the adult brain, in which the hippocampal formation is the predominant region. Expressed in the seminiferous tubules of mature testis, but not in the primordial germ cells.

The protein resides in the cytoplasm. It localises to the perinuclear region. In terms of biological role, may act as a translational repressor which regulates translation of specific mRNAs by forming a complex with PUM2 that associates with the 3'-UTR of mRNA targets. Capable of interfering with the proadhesive and anti-invasive functions of E-cadherin. Up-regulates the production of MMP14 to promote tumor cell invasion. Not essential for normal development. In Mus musculus (Mouse), this protein is Nanos homolog 1 (Nanos1).